An 89-amino-acid chain; its full sequence is HssA/B-like protein 22 (89 aa).

This sequence belongs to the hssA/B family.

The chain is HssA/B-like protein 22 (hssl22) from Dictyostelium discoideum (Social amoeba).